We begin with the raw amino-acid sequence, 118 residues long: Co-chaperonin GroES (118 aa).

It belongs to the GroES chaperonin family. Heptamer of 7 subunits arranged in a ring. Interacts with the chaperonin GroEL.

Its subcellular location is the cytoplasm. Functionally, together with the chaperonin GroEL, plays an essential role in assisting protein folding. The GroEL-GroES system forms a nano-cage that allows encapsulation of the non-native substrate proteins and provides a physical environment optimized to promote and accelerate protein folding. GroES binds to the apical surface of the GroEL ring, thereby capping the opening of the GroEL channel. This is Co-chaperonin GroES from Helicobacter pylori (strain G27).